Consider the following 99-residue polypeptide: Virion membrane protein OPG135 (99 aa).

The N-terminal stretch at 1–22 is a signal peptide; sequence MSCYTAILKSVGGLALFQVANG. The Intravirion portion of the chain corresponds to 23-45; it reads AIDLCRHFFMYFCEQKLRPNSFW. Residues 46 to 66 traverse the membrane as a helical segment; it reads FVVVRAIASMIMYLVLGIALL. Topologically, residues 67 to 83 are virion surface; that stretch reads YISEQDDKKNTNNDGSN. A compositionally biased stretch (basic and acidic residues) spans 73 to 89; that stretch reads DKKNTNNDGSNNDKRNE. Residues 73-99 are disordered; that stretch reads DKKNTNNDGSNNDKRNESSINSNSSPK. An N-linked (GlcNAc...) asparagine; by host glycan is attached at N88. Over residues 90 to 99 the composition is skewed to polar residues; that stretch reads SSINSNSSPK.

Belongs to the oerthopoxvirus OPG135 family.

Its subcellular location is the virion membrane. It is found in the host cytoplasm. Functionally, envelope protein. Required for an early step in virion morphogenesis. In Homo sapiens (Human), this protein is Virion membrane protein OPG135 (OPG135).